Consider the following 1050-residue polypeptide: Diacylglycerol kinase iota (1050 aa).

Disordered stretches follow at residues 53–74 (PSSS…GSGA), 92–111 (AAAA…EKEE), and 328–356 (SLKA…ETKG). A compositionally biased stretch (low complexity) spans 92–105 (AAAAAALEEPAAAG). A compositionally biased stretch (basic residues) spans 332–347 (SNRKKKRTSFKRKASK). The region spanning 367–502 (PLMKPLLVFV…DRWNLHVERN (136 aa)) is the DAGKc domain. ANK repeat units follow at residues 943–972 (GHCS…AELL) and 979–1008 (TGET…SLRQ). Residues 1048 to 1050 (TAV) carry the PDZ-binding motif.

This sequence belongs to the eukaryotic diacylglycerol kinase family. As to quaternary structure, interacts (via PDZ-binding motif) with DLG4; controls the localization of DGKI to the synapse. Interacts (via PDZ-binding motif) with DLG1. Interacts (via PDZ-binding motif) with DLG2. Interacts (via PDZ-binding motif) with DLG3. May interact with RASGRP3; involved in the regulation of RASGRP3 activity. In terms of tissue distribution, in brain, expressed in the hippocampus and cerebellum with stronger expression in the Purkinje cell layer (at protein level). Expressed in kidney.

It is found in the cell projection. The protein localises to the axon. It localises to the dendrite. The protein resides in the presynapse. Its subcellular location is the postsynapse. It is found in the postsynaptic density. The protein localises to the synaptic cell membrane. It localises to the cytoplasmic vesicle. The protein resides in the secretory vesicle. Its subcellular location is the synaptic vesicle membrane. It is found in the cytoplasm. The protein localises to the cytosol. It localises to the nucleus. The catalysed reaction is a 1,2-diacyl-sn-glycerol + ATP = a 1,2-diacyl-sn-glycero-3-phosphate + ADP + H(+). The enzyme catalyses 1,2-di-(9Z-octadecenoyl)-sn-glycerol + ATP = 1,2-di-(9Z-octadecenoyl)-sn-glycero-3-phosphate + ADP + H(+). It carries out the reaction 1-octadecanoyl-2-(5Z,8Z,11Z,14Z-eicosatetraenoyl)-sn-glycerol + ATP = 1-octadecanoyl-2-(5Z,8Z,11Z,14Z-eicosatetraenoyl)-sn-glycero-3-phosphate + ADP + H(+). It catalyses the reaction 1-octadecanoyl-2-(9Z,12Z)-octadecadienoyl-sn-glycerol + ATP = 1-octadecanoyl-2-(9Z,12Z-octadecadienoyl)-sn-glycero-3-phosphate + ADP + H(+). Its pathway is lipid metabolism; glycerolipid metabolism. Its function is as follows. Diacylglycerol kinase that converts diacylglycerol/DAG into phosphatidic acid/phosphatidate/PA and regulates the respective levels of these two bioactive lipids. Thereby, acts as a central switch between the signaling pathways activated by these second messengers with different cellular targets and opposite effects in numerous biological processes. Has probably no preference for any of the diacylglycerols in terms of the acyl chain composition, especially for the acyl chain at the sn-2 position. By controlling the diacylglycerol/DAG-mediated activation of RASGRP3, negatively regulates the Rap1 signaling pathway. May play a role in presynaptic diacylglycerol/DAG signaling and control neurotransmitter release during metabotropic glutamate receptor-dependent long-term depression. This Mus musculus (Mouse) protein is Diacylglycerol kinase iota.